A 414-amino-acid chain; its full sequence is Dimethylsulfoniopropionate lyase DddY (414 aa).

The first 18 residues, 1-18, serve as a signal peptide directing secretion; it reads MKYMVLFSGLLFSNVLVA.

It belongs to the DMSP lyase DddY family.

It is found in the periplasm. It catalyses the reaction S,S-dimethyl-beta-propiothetin = acrylate + dimethyl sulfide + H(+). Its function is as follows. Catalyzes the cleavage of dimethylsulfoniopropionate (DMSP) into dimethyl sulfide (DMS) and acrylate. This Shewanella woodyi (strain ATCC 51908 / MS32) protein is Dimethylsulfoniopropionate lyase DddY.